A 505-amino-acid polypeptide reads, in one-letter code: Hexose transporter 1 (505 aa).

Over 1–27 (MNILRMDILSRGGTQEIEHRDGFFNTS) the chain is Cytoplasmic. A helical membrane pass occupies residues 28-48 (FQYVLSACLASFIFGYQVSVL). Residues 49 to 78 (NTIKSYIVVEFEWCSTKTDTSCEDSILKSS) are Extracellular-facing. The cysteines at positions 62 and 70 are disulfide-linked. Residues 79–99 (FLLASVFIGAVLGSGFSGYLV) traverse the membrane as a helical segment. The Cytoplasmic segment spans residues 100–104 (KFGRR). The chain crosses the membrane as a helical span at residues 105–125 (FSLMVIYIFFIFVSILTAISH). Residues 126–134 (HFHTILYAR) are Extracellular-facing. A helical transmembrane segment spans residues 135–155 (LLSGFGIGLITVSVPMYISEM). Residues 156-165 (THKDKKGAYG) are Cytoplasmic-facing. Residues 166–186 (VLHQLFITFGIFVAVLLGLFL) traverse the membrane as a helical segment. Gln169 contributes to the alpha-D-glucose binding site. Gln169 contacts beta-D-glucose. The Extracellular portion of the chain corresponds to 187–208 (GDGPKINGKSIELSNFEMFWWR). A helical transmembrane segment spans residues 209-229 (FMFFLPTIISLLGIILLIAFY). The Cytoplasmic segment spans residues 230-294 (KEETPYFLYE…SALKIPAYRN (65 aa)). The helical transmembrane segment at 295–315 (VIILGCILSGFQQFTGINVLV) threads the bilayer. Residues Gln306, Gln307, and Asn312 each contribute to the alpha-D-glucose site. Gln306 is a binding site for beta-D-glucose. Position 312 (Asn312) interacts with beta-D-glucose. Residues 316–332 (ANSNELYKEFLDKNLIT) lie on the Extracellular side of the membrane. Residues 333–353 (ILSVIMTAVNFLMTFPAIYII) form a helical membrane-spanning segment. Asn342 is a beta-D-glucose binding site. The Cytoplasmic segment spans residues 354-358 (EKIGR). The helical transmembrane segment at 359 to 379 (KTLLLGGCIGVICAFLPTVIA) threads the bilayer. Topologically, residues 380 to 393 (RQVWGPTKIVNGLS) are extracellular. Residues 394–414 (IAGTFLMIISFAVSYGPVLWI) traverse the membrane as a helical segment. An alpha-D-glucose-binding site is contributed by Trp413. Residues 415–430 (YLHEMYPSEIKDSAAS) lie on the Cytoplasmic side of the membrane. Residues 431-451 (LASLINWVCAIIVVFPSDIII) form a helical membrane-spanning segment. Residues 452-456 (KKSPS) lie on the Extracellular side of the membrane. Residues 457–477 (ILFMFFSVMCIIAFLFIMFFI) form a helical membrane-spanning segment. Over 478 to 505 (KETKGGEIGTSPYISLEERQKHIGKSKV) the chain is Cytoplasmic.

This sequence belongs to the major facilitator superfamily. Sugar transporter (TC 2.A.1.1) family. As to quaternary structure, homodimer.

The protein localises to the cell membrane. The enzyme catalyses D-glucose(out) = D-glucose(in). The catalysed reaction is D-fructose(out) = D-fructose(in). It carries out the reaction D-galactose(in) = D-galactose(out). It catalyses the reaction D-mannose(out) = D-mannose(in). The enzyme catalyses D-glucosamine(out) = D-glucosamine(in). The catalysed reaction is D-xylose(out) = D-xylose(in). Its activity is regulated as follows. Inhibited by cytochalasin B. Sodium-independent facilitative hexose transporter. Can transport D-glucose and D-fructose. Can transport D-mannose, D-galactose, D-xylose and D-glucosamine. This is Hexose transporter 1 from Plasmodium yoelii yoelii.